The primary structure comprises 276 residues: Protein HemX (276 aa).

8 helical membrane-spanning segments follow: residues 9–29, 40–60, 66–86, 93–113, 132–152, 187–207, 217–237, and 247–267; these read LNEG…IDFL, FWLL…FMWV, VLNV…LSLV, VDFI…IHTF, LVIH…SFVF, VLNV…VIWA, FDAK…YLYI, and VAAL…FLLG.

To M.leprae U1620K.

The protein localises to the cell membrane. Required for HemL synthesis. The protein is Protein HemX (hemX) of Bacillus subtilis (strain 168).